The sequence spans 63 residues: Venom peptide U-reduvitoxin-Pp19 (63 aa).

The first 23 residues, methionine 1 to glycine 23, serve as a signal peptide directing secretion. 3 disulfides stabilise this stretch: cysteine 15–cysteine 62, cysteine 25–cysteine 53, and cysteine 30–cysteine 61.

In terms of tissue distribution, hemolymph (at protein level). Also weakly expressed by the venom gland (at protein level).

The protein localises to the secreted. Toxin with insecticidal activity. High doses of recombinant toxin causes impaired motor behavior of D.melanogaster, which progress slowly to paralysis and death after several hours. The polypeptide is Venom peptide U-reduvitoxin-Pp19 (Pristhesancus plagipennis (Common assassin bug)).